The following is a 352-amino-acid chain: Molybdenum import ATP-binding protein ModC (352 aa).

The region spanning 1–229 is the ABC transporter domain; it reads MLELNFSQTL…SVMNPWLPKE (229 aa). 31–38 lines the ATP pocket; it reads GVSGAGKT. Positions 289–352 constitute a Mop domain; that stretch reads QTSIRNVLRA…AQIKSVSITA (64 aa).

The protein belongs to the ABC transporter superfamily. Molybdate importer (TC 3.A.1.8) family. In terms of assembly, the complex is composed of two ATP-binding proteins (ModC), two transmembrane proteins (ModB) and a solute-binding protein (ModA).

Its subcellular location is the cell inner membrane. The catalysed reaction is molybdate(out) + ATP + H2O = molybdate(in) + ADP + phosphate + H(+). Its function is as follows. Part of the ABC transporter complex ModABC involved in molybdenum import. Responsible for energy coupling to the transport system. The polypeptide is Molybdenum import ATP-binding protein ModC (Shigella dysenteriae serotype 1 (strain Sd197)).